A 388-amino-acid polypeptide reads, in one-letter code: Succinate--CoA ligase [ADP-forming] subunit beta (388 aa).

The 236-residue stretch at Lys-9–His-244 folds into the ATP-grasp domain. Residues Lys-46, Gly-53–Gly-55, Glu-99, Thr-102, and Glu-107 each bind ATP. Asn-199 and Asp-213 together coordinate Mg(2+). Residues Asn-264 and Gly-321–Val-323 each bind substrate.

This sequence belongs to the succinate/malate CoA ligase beta subunit family. Heterotetramer of two alpha and two beta subunits. The cofactor is Mg(2+).

The catalysed reaction is succinate + ATP + CoA = succinyl-CoA + ADP + phosphate. It carries out the reaction GTP + succinate + CoA = succinyl-CoA + GDP + phosphate. It participates in carbohydrate metabolism; tricarboxylic acid cycle; succinate from succinyl-CoA (ligase route): step 1/1. Succinyl-CoA synthetase functions in the citric acid cycle (TCA), coupling the hydrolysis of succinyl-CoA to the synthesis of either ATP or GTP and thus represents the only step of substrate-level phosphorylation in the TCA. The beta subunit provides nucleotide specificity of the enzyme and binds the substrate succinate, while the binding sites for coenzyme A and phosphate are found in the alpha subunit. The chain is Succinate--CoA ligase [ADP-forming] subunit beta from Shewanella putrefaciens (strain CN-32 / ATCC BAA-453).